Consider the following 429-residue polypeptide: Enolase (429 aa).

A (2R)-2-phosphoglycerate-binding site is contributed by Q163. E205 acts as the Proton donor in catalysis. Positions 242, 285, and 312 each coordinate Mg(2+). Positions 337, 366, 367, and 388 each coordinate (2R)-2-phosphoglycerate. K337 serves as the catalytic Proton acceptor.

This sequence belongs to the enolase family. It depends on Mg(2+) as a cofactor.

It localises to the cytoplasm. It is found in the secreted. The protein resides in the cell surface. The enzyme catalyses (2R)-2-phosphoglycerate = phosphoenolpyruvate + H2O. It participates in carbohydrate degradation; glycolysis; pyruvate from D-glyceraldehyde 3-phosphate: step 4/5. Its function is as follows. Catalyzes the reversible conversion of 2-phosphoglycerate (2-PG) into phosphoenolpyruvate (PEP). It is essential for the degradation of carbohydrates via glycolysis. This chain is Enolase, found in Methylorubrum populi (strain ATCC BAA-705 / NCIMB 13946 / BJ001) (Methylobacterium populi).